The following is a 79-amino-acid chain: D-alanyl carrier protein (79 aa).

Residues 1 to 77 form the Carrier domain; sequence MDIKSEVLAI…KIVAGVTELC (77 aa). O-(pantetheine 4'-phosphoryl)serine is present on Ser-35.

This sequence belongs to the DltC family. Post-translationally, 4'-phosphopantetheine is transferred from CoA to a specific serine of apo-DCP.

The protein resides in the cytoplasm. It functions in the pathway cell wall biogenesis; lipoteichoic acid biosynthesis. Its function is as follows. Carrier protein involved in the D-alanylation of lipoteichoic acid (LTA). The loading of thioester-linked D-alanine onto DltC is catalyzed by D-alanine--D-alanyl carrier protein ligase DltA. The DltC-carried D-alanyl group is further transferred to cell membrane phosphatidylglycerol (PG) by forming an ester bond, probably catalyzed by DltD. D-alanylation of LTA plays an important role in modulating the properties of the cell wall in Gram-positive bacteria, influencing the net charge of the cell wall. In Streptococcus agalactiae serotype Ia (strain ATCC 27591 / A909 / CDC SS700), this protein is D-alanyl carrier protein.